The chain runs to 259 residues: Ubiquinone/menaquinone biosynthesis C-methyltransferase UbiE (259 aa).

S-adenosyl-L-methionine contacts are provided by residues Thr82, Asp103, Asn131–Ala132, and Ser148.

This sequence belongs to the class I-like SAM-binding methyltransferase superfamily. MenG/UbiE family.

It carries out the reaction a 2-demethylmenaquinol + S-adenosyl-L-methionine = a menaquinol + S-adenosyl-L-homocysteine + H(+). The enzyme catalyses a 2-methoxy-6-(all-trans-polyprenyl)benzene-1,4-diol + S-adenosyl-L-methionine = a 5-methoxy-2-methyl-3-(all-trans-polyprenyl)benzene-1,4-diol + S-adenosyl-L-homocysteine + H(+). It functions in the pathway quinol/quinone metabolism; menaquinone biosynthesis; menaquinol from 1,4-dihydroxy-2-naphthoate: step 2/2. It participates in cofactor biosynthesis; ubiquinone biosynthesis. Functionally, methyltransferase required for the conversion of demethylmenaquinol (DMKH2) to menaquinol (MKH2) and the conversion of 2-polyprenyl-6-methoxy-1,4-benzoquinol (DDMQH2) to 2-polyprenyl-3-methyl-6-methoxy-1,4-benzoquinol (DMQH2). This is Ubiquinone/menaquinone biosynthesis C-methyltransferase UbiE from Haemophilus ducreyi (strain 35000HP / ATCC 700724).